We begin with the raw amino-acid sequence, 132 residues long: MAAMKKAMKVKKSAKKSAKKSGKKGGMKKKAKRVSKVARGKRAKSSVFRGTKERTSGGLTKNSLVKNKQGRVVSKKQSEHGKKIFKKHGLQKWIDAVTKARKALGIKGFQAVGGSSAKGKILLAKSRSFYKK.

Residues 1-44 (MAAMKKAMKVKKSAKKSAKKSGKKGGMKKKAKRVSKVARGKRAK) are compositionally biased toward basic residues. A disordered region spans residues 1–84 (MAAMKKAMKV…KKQSEHGKKI (84 aa)). Residues 57–66 (GGLTKNSLVK) are compositionally biased toward polar residues.

Post-translationally, phosphorylated.

The protein localises to the nucleus. It localises to the chromosome. DNA-binding protein, which similarly to histones, may compact DNA into chromatin. The chain is Dinoflagellate viral nucleoprotein 5 from Hematodinium sp.